A 277-amino-acid polypeptide reads, in one-letter code: Phosphatidylglycerol--prolipoprotein diacylglyceryl transferase (277 aa).

4 helical membrane-spanning segments follow: residues 11 to 31, 55 to 75, 93 to 113, and 117 to 137; these read IIFSIGSFKAHWYGFMYLISF, LLYIIFISSCIGGRIGYIIFY, GGMSFHGGLIGAIIAMYYLSL, and VKILKISDFIVPLVPFGLGAG. Arg138 contacts a 1,2-diacyl-sn-glycero-3-phospho-(1'-sn-glycerol). The next 3 membrane-spanning stretches (helical) occupy residues 192–212, 220–240, and 256–276; these read PSQLYEFFLEGIFLFFIIYFF, GSISALFLISYGILRIISEFF, and MGQILSIPMIIIGVLYVNLFI.

It belongs to the Lgt family.

The protein localises to the cell inner membrane. It catalyses the reaction L-cysteinyl-[prolipoprotein] + a 1,2-diacyl-sn-glycero-3-phospho-(1'-sn-glycerol) = an S-1,2-diacyl-sn-glyceryl-L-cysteinyl-[prolipoprotein] + sn-glycerol 1-phosphate + H(+). The protein operates within protein modification; lipoprotein biosynthesis (diacylglyceryl transfer). Functionally, catalyzes the transfer of the diacylglyceryl group from phosphatidylglycerol to the sulfhydryl group of the N-terminal cysteine of a prolipoprotein, the first step in the formation of mature lipoproteins. This Buchnera aphidicola subsp. Schizaphis graminum (strain Sg) protein is Phosphatidylglycerol--prolipoprotein diacylglyceryl transferase.